The sequence spans 954 residues: Translation initiation factor IF-2 (954 aa).

Over residues 56 to 75 (KAAAPAAPKAPAPAAESRPA) the composition is skewed to low complexity. The interval 56–355 (KAAAPAAPKA…GVSVPRGDGN (300 aa)) is disordered. Residues 76–87 (APAPGPAAPKAP) are compositionally biased toward pro residues. Composition is skewed to low complexity over residues 88–125 (APKV…KPGA) and 138–151 (PRQG…SAPR). The segment covering 241-254 (PGAPRPGGPRPTPG) has biased composition (pro residues). Gly residues predominate over residues 269 to 322 (GRPGGGGRGPGRPGAPGTGGPGGGGGAPAGGGFGKGGRGRGGTQGAFGKGGAGR). The span at 323-332 (GKQRKSKRAK) shows a compositional bias: basic residues. The tr-type G domain maps to 447–618 (PRAPVVTVMG…AVLLTADAAL (172 aa)). The segment at 456–463 (GHVDHGKT) is G1. GTP is bound at residue 456–463 (GHVDHGKT). The G2 stretch occupies residues 481-485 (GITQH). Positions 506 to 509 (DTPG) are G3. GTP contacts are provided by residues 506–510 (DTPGH) and 560–563 (NKID). Residues 560–563 (NKID) form a G4 region. The tract at residues 596–598 (SAR) is G5.

Belongs to the TRAFAC class translation factor GTPase superfamily. Classic translation factor GTPase family. IF-2 subfamily.

It localises to the cytoplasm. Functionally, one of the essential components for the initiation of protein synthesis. Protects formylmethionyl-tRNA from spontaneous hydrolysis and promotes its binding to the 30S ribosomal subunits. Also involved in the hydrolysis of GTP during the formation of the 70S ribosomal complex. This chain is Translation initiation factor IF-2, found in Pseudarthrobacter chlorophenolicus (strain ATCC 700700 / DSM 12829 / CIP 107037 / JCM 12360 / KCTC 9906 / NCIMB 13794 / A6) (Arthrobacter chlorophenolicus).